Reading from the N-terminus, the 274-residue chain is Phosphate import ATP-binding protein PstB (274 aa).

Residues 28-269 (VTVRDLNFYY…PNDRRTQDYI (242 aa)) form the ABC transporter domain. Residue 60–67 (GPSGCGKS) participates in ATP binding.

Belongs to the ABC transporter superfamily. Phosphate importer (TC 3.A.1.7) family. As to quaternary structure, the complex is composed of two ATP-binding proteins (PstB), two transmembrane proteins (PstC and PstA) and a solute-binding protein (PstS).

Its subcellular location is the cell inner membrane. The catalysed reaction is phosphate(out) + ATP + H2O = ADP + 2 phosphate(in) + H(+). Part of the ABC transporter complex PstSACB involved in phosphate import. Responsible for energy coupling to the transport system. The chain is Phosphate import ATP-binding protein PstB from Rhodopseudomonas palustris (strain HaA2).